The sequence spans 328 residues: DhaKLM operon coactivator DhaQ (328 aa).

The region spanning 6–328 (STNEIPEEML…LNVPTGAFAW (323 aa)) is the DhaK domain. The residue at position 215 (H215) is a Tele-(1,2,3-trihydroxypropan-2-yl)histidine.

As to quaternary structure, homodimer. Interacts with a homodimer of DhaS.

Functionally, coactivator for the transcription factor DhaS. The heterotetramer formed by DhaQ and DhaS functions as a transcriptional regulator. Activated by covalent binding of dihydroxyacetone to DhaQ. The complex activates the dhaKLM operon. The protein is DhaKLM operon coactivator DhaQ (dhaQ) of Lactococcus lactis subsp. lactis (strain IL1403) (Streptococcus lactis).